Reading from the N-terminus, the 492-residue chain is GTPase Obg (492 aa).

One can recognise an Obg domain in the interval 2–159 (PRFVDRVVIH…RELTLELKTV (158 aa)). Positions 160–340 (ADVGLIGFPS…LIFGLWQMIS (181 aa)) constitute an OBG-type G domain. GTP is bound by residues 166 to 173 (GFPSAGKS), 191 to 195 (FTTLV), 212 to 215 (DVPG), 292 to 295 (NKID), and 321 to 323 (STV). Mg(2+) is bound by residues serine 173 and threonine 193. An OCT domain is found at 358-438 (PVPVDDSGFR…IGDMTFDWEP (81 aa)). The segment at 449–492 (SGRGTDARLERTERVGAAERKAARRQRRTGDDAERGTTERGENT) is disordered. 2 stretches are compositionally biased toward basic and acidic residues: residues 453–469 (TDAR…AERK) and 476–492 (RTGD…GENT).

This sequence belongs to the TRAFAC class OBG-HflX-like GTPase superfamily. OBG GTPase family. Monomer. The cofactor is Mg(2+).

It localises to the cytoplasm. In terms of biological role, an essential GTPase which binds GTP, GDP and possibly (p)ppGpp with moderate affinity, with high nucleotide exchange rates and a fairly low GTP hydrolysis rate. Plays a role in control of the cell cycle, stress response, ribosome biogenesis and in those bacteria that undergo differentiation, in morphogenesis control. This Mycobacterium avium (strain 104) protein is GTPase Obg.